The sequence spans 803 residues: Elongation factor G, mitochondrial (803 aa).

The N-terminal 24 residues, 1–24, are a transit peptide targeting the mitochondrion; that stretch reads MVRPAQVRAFSGLARSATSTRLIP. One can recognise a tr-type G domain in the interval 102 to 388; that stretch reads SKVRNIGIAA…GVCDYLPNPS (287 aa). GTP contacts are provided by residues 111 to 118, 186 to 190, and 240 to 243; these read AHIDSGKT, DTPGH, and NKMD.

This sequence belongs to the TRAFAC class translation factor GTPase superfamily. Classic translation factor GTPase family. EF-G/EF-2 subfamily.

The protein localises to the mitochondrion. The protein operates within protein biosynthesis; polypeptide chain elongation. Mitochondrial GTPase that catalyzes the GTP-dependent ribosomal translocation step during translation elongation. During this step, the ribosome changes from the pre-translocational (PRE) to the post-translocational (POST) state as the newly formed A-site-bound peptidyl-tRNA and P-site-bound deacylated tRNA move to the P and E sites, respectively. Catalyzes the coordinated movement of the two tRNA molecules, the mRNA and conformational changes in the ribosome. This chain is Elongation factor G, mitochondrial (mef1), found in Talaromyces marneffei (strain ATCC 18224 / CBS 334.59 / QM 7333) (Penicillium marneffei).